The primary structure comprises 61 residues: Small ribosomal subunit protein uS14 (61 aa).

Residues C24, C27, C40, and C43 each coordinate Zn(2+).

The protein belongs to the universal ribosomal protein uS14 family. Zinc-binding uS14 subfamily. Part of the 30S ribosomal subunit. Contacts proteins S3 and S10. Requires Zn(2+) as cofactor.

In terms of biological role, binds 16S rRNA, required for the assembly of 30S particles and may also be responsible for determining the conformation of the 16S rRNA at the A site. In Deinococcus geothermalis (strain DSM 11300 / CIP 105573 / AG-3a), this protein is Small ribosomal subunit protein uS14.